The following is a 411-amino-acid chain: NADH-quinone oxidoreductase subunit H (411 aa).

9 consecutive transmembrane segments (helical) span residues leucine 18–isoleucine 38, tryptophan 84–isoleucine 104, leucine 124–leucine 144, valine 165–threonine 185, threonine 198–glutamate 218, valine 260–isoleucine 280, tryptophan 288–leucine 308, methionine 321–isoleucine 341, and alanine 352–glycine 372.

This sequence belongs to the complex I subunit 1 family. As to quaternary structure, NDH-1 is composed of 14 different subunits. Subunits NuoA, H, J, K, L, M, N constitute the membrane sector of the complex.

The protein resides in the cell membrane. It catalyses the reaction a quinone + NADH + 5 H(+)(in) = a quinol + NAD(+) + 4 H(+)(out). NDH-1 shuttles electrons from NADH, via FMN and iron-sulfur (Fe-S) centers, to quinones in the respiratory chain. The immediate electron acceptor for the enzyme in this species is believed to be menaquinone. Couples the redox reaction to proton translocation (for every two electrons transferred, four hydrogen ions are translocated across the cytoplasmic membrane), and thus conserves the redox energy in a proton gradient. This subunit may bind ubiquinone. The protein is NADH-quinone oxidoreductase subunit H of Mycolicibacterium vanbaalenii (strain DSM 7251 / JCM 13017 / BCRC 16820 / KCTC 9966 / NRRL B-24157 / PYR-1) (Mycobacterium vanbaalenii).